Reading from the N-terminus, the 120-residue chain is Large ribosomal subunit protein bL12 (120 aa).

This sequence belongs to the bacterial ribosomal protein bL12 family. Homodimer. Part of the ribosomal stalk of the 50S ribosomal subunit. Forms a multimeric L10(L12)X complex, where L10 forms an elongated spine to which 2 to 4 L12 dimers bind in a sequential fashion. Binds GTP-bound translation factors.

Functionally, forms part of the ribosomal stalk which helps the ribosome interact with GTP-bound translation factors. Is thus essential for accurate translation. The chain is Large ribosomal subunit protein bL12 from Clostridium botulinum (strain Alaska E43 / Type E3).